A 360-amino-acid chain; its full sequence is Putative F-box protein At1g65770 (360 aa).

The 49-residue stretch at 2–50 (ADWSTLPVDLLNMIAGRLFSNIELKRFRSICRSWRSSVPGAGKKNPFRT) folds into the F-box domain.

The sequence is that of Putative F-box protein At1g65770 from Arabidopsis thaliana (Mouse-ear cress).